A 496-amino-acid chain; its full sequence is Splicing factor U2AF 65 kDa subunit (496 aa).

Residues 1 to 26 (MSDHQDGMKLEDIERQFLDVAQREGG) are compositionally biased toward basic and acidic residues. The segment at 1 to 142 (MSDHQDGMKL…PKKYRFWDVP (142 aa)) is disordered. Positions 59–77 (KKRKRSRSRDRDTRRRSRS) are enriched in basic residues. Basic and acidic residues-rich tracts occupy residues 78 to 96 (RDRG…DRSR) and 105 to 138 (GGRD…KYRF). RRM domains lie at 184–266 (RRLY…RPRD), 291–368 (NKIF…LACA), and 404–488 (NMVT…YYDV).

Forms a heterodimer with the U2AF small subunit.

The protein localises to the nucleus. In terms of biological role, necessary for the splicing of pre-mRNA. Binds to the polypyrimidine tract of introns early during spliceosome assembly. This Caenorhabditis elegans protein is Splicing factor U2AF 65 kDa subunit (uaf-1).